A 121-amino-acid polypeptide reads, in one-letter code: Protein yippee-like 5 (121 aa).

In terms of domain architecture, Yippee spans 13 to 110; the sequence is RLFSCANCDA…LERALVRESE (98 aa). Residues C17, C20, C73, and C76 each coordinate Zn(2+). Residue S118 is modified to Phosphoserine.

The protein belongs to the yippee family. Identified in the CTLH complex that contains GID4, RANBP9 and/or RANBP10, MKLN1, MAEA, RMND5A (or alternatively its paralog RMND5B), GID8, ARMC8, WDR26 and YPEL5. Within this complex, MAEA, RMND5A (or alternatively its paralog RMND5B), GID8, WDR26, and RANBP9 and/or RANBP10 form the catalytic core, while GID4, MKLN1, ARMC8 and YPEL5 have ancillary roles. Interacts with RANBP9 and RANBP10.

It localises to the nucleus. The protein resides in the cytoplasm. Its subcellular location is the cytoskeleton. It is found in the microtubule organizing center. The protein localises to the centrosome. It localises to the spindle pole. The protein resides in the midbody. Component of the CTLH E3 ubiquitin-protein ligase complex that selectively accepts ubiquitin from UBE2H and mediates ubiquitination and subsequent proteasomal degradation of the transcription factor HBP1. Required for normal cell proliferation. The protein is Protein yippee-like 5 (YPEL5) of Macaca fascicularis (Crab-eating macaque).